The primary structure comprises 701 residues: DNA ligase 2 (701 aa).

The span at 1–10 (MSPAPQNRQP) shows a compositional bias: polar residues. The tract at residues 1 to 21 (MSPAPQNRQPSGVPVGGQFAA) is disordered. NAD(+)-binding positions include 64 to 68 (DAEFD), 111 to 112 (SL), and Glu133. Catalysis depends on Lys135, which acts as the N6-AMP-lysine intermediate. NAD(+)-binding residues include Arg156, Glu189, Lys302, and Lys326. Zn(2+) contacts are provided by Cys420, Cys423, Cys436, and Cys441. Residues 603 to 613 (KAAPAAGAKAP) show a composition bias toward low complexity. The disordered stretch occupies residues 603-623 (KAAPAAGAKAPKLTKPDGKPM). Residues 615-701 (LTKPDGKPMN…FAQMVEDGEV (87 aa)) form the BRCT domain.

Belongs to the NAD-dependent DNA ligase family. LigA subfamily. Mg(2+) is required as a cofactor. The cofactor is Mn(2+).

It carries out the reaction NAD(+) + (deoxyribonucleotide)n-3'-hydroxyl + 5'-phospho-(deoxyribonucleotide)m = (deoxyribonucleotide)n+m + AMP + beta-nicotinamide D-nucleotide.. In terms of biological role, DNA ligase that catalyzes the formation of phosphodiester linkages between 5'-phosphoryl and 3'-hydroxyl groups in double-stranded DNA using NAD as a coenzyme and as the energy source for the reaction. It is essential for DNA replication and repair of damaged DNA. This chain is DNA ligase 2, found in Pseudarthrobacter chlorophenolicus (strain ATCC 700700 / DSM 12829 / CIP 107037 / JCM 12360 / KCTC 9906 / NCIMB 13794 / A6) (Arthrobacter chlorophenolicus).